The following is a 342-amino-acid chain: Dihydroorotase (342 aa).

Zn(2+) is bound by residues H13 and H15. Residues 15-17 and N41 each bind substrate; that span reads HLR. 3 residues coordinate Zn(2+): K98, H135, and H173. K98 carries the post-translational modification N6-carboxylysine. Substrate is bound at residue H135. L218 serves as a coordination point for substrate. A Zn(2+)-binding site is contributed by D246. D246 is an active-site residue. Substrate-binding residues include H250 and A262.

Belongs to the metallo-dependent hydrolases superfamily. DHOase family. Class II DHOase subfamily. In terms of assembly, homodimer. Zn(2+) is required as a cofactor.

The catalysed reaction is (S)-dihydroorotate + H2O = N-carbamoyl-L-aspartate + H(+). It functions in the pathway pyrimidine metabolism; UMP biosynthesis via de novo pathway; (S)-dihydroorotate from bicarbonate: step 3/3. Its function is as follows. Catalyzes the reversible cyclization of carbamoyl aspartate to dihydroorotate. This chain is Dihydroorotase, found in Vibrio parahaemolyticus serotype O3:K6 (strain RIMD 2210633).